The sequence spans 21 residues: Peptide PGLa-R6 (21 aa).

L21 carries the leucine amide modification.

In terms of tissue distribution, expressed by the skin glands.

It localises to the secreted. Its function is as follows. Antimicrobial peptide. This is Peptide PGLa-R6 from Xenopus ruwenzoriensis (Uganda clawed frog).